The following is a 37-amino-acid chain: Large ribosomal subunit protein bL36 (37 aa).

Belongs to the bacterial ribosomal protein bL36 family.

This Thioalkalivibrio sulfidiphilus (strain HL-EbGR7) protein is Large ribosomal subunit protein bL36.